Reading from the N-terminus, the 185-residue chain is UPF0397 protein PAM_019 (185 aa).

A run of 5 helical transmembrane segments spans residues 13–33 (IGLSAAIFFVLSCFASIPVGF), 42–62 (AFLAFIAVAFGPAVGFYVGLI), 69–89 (FILFGNVSWNWVLCSALIGFI), 109–129 (IVYFWLYQVAFNFIIWGFFAP), and 143–163 (VYLQSFLIVISNILAYSVVGI).

Belongs to the UPF0397 family.

Its subcellular location is the cell membrane. This Onion yellows phytoplasma (strain OY-M) protein is UPF0397 protein PAM_019.